Consider the following 92-residue polypeptide: Small ribosomal subunit protein uS15c (92 aa).

This sequence belongs to the universal ribosomal protein uS15 family. Part of the 30S ribosomal subunit.

The protein resides in the plastid. The protein localises to the chloroplast. This is Small ribosomal subunit protein uS15c (rps15) from Guizotia abyssinica (Niger).